We begin with the raw amino-acid sequence, 214 residues long: Transmembrane emp24 domain-containing protein p24delta9 (214 aa).

A signal peptide spans M1 to S24. Topologically, residues L25–K181 are lumenal. The region spanning T34–R149 is the GOLD domain. Positions L164–A177 form a coiled coil. R167 bears the Omega-N-methylated arginine mark. Residues M182 to V202 traverse the membrane as a helical segment. The Cytoplasmic segment spans residues H203 to I214. The COPII vesicle coat-binding signature appears at F207–F208. A COPI vesicle coat-binding motif is present at residues F207–I214.

Belongs to the EMP24/GP25L family. Probably oligomerizes with other members of the EMP24/GP25L family. Associates with the COPI vesicle coat (coatomer). Associates with the COPII vesicle coat (coatomer).

It is found in the endoplasmic reticulum membrane. The protein localises to the golgi apparatus. It localises to the cis-Golgi network membrane. The protein resides in the golgi stack membrane. Involved in vesicular protein trafficking. Mainly functions in the early secretory pathway. Thought to act as cargo receptor at the lumenal side for incorporation of secretory cargo molecules into transport vesicles and to be involved in vesicle coat formation at the cytoplasmic side. In Arabidopsis thaliana (Mouse-ear cress), this protein is Transmembrane emp24 domain-containing protein p24delta9.